The following is an 84-amino-acid chain: Small ribosomal subunit protein uS17 (84 aa).

The protein belongs to the universal ribosomal protein uS17 family. In terms of assembly, part of the 30S ribosomal subunit.

Functionally, one of the primary rRNA binding proteins, it binds specifically to the 5'-end of 16S ribosomal RNA. This chain is Small ribosomal subunit protein uS17, found in Karelsulcia muelleri (strain GWSS) (Sulcia muelleri).